A 372-amino-acid chain; its full sequence is Glutamate 5-kinase (372 aa).

Position 14 (lysine 14) interacts with ATP. Substrate is bound by residues serine 54, aspartate 141, and asparagine 153. 173–174 (TD) is a binding site for ATP. Residues 280–358 (RGHVVIDAGA…GEIEAVLGYM (79 aa)) form the PUA domain.

Belongs to the glutamate 5-kinase family.

The protein localises to the cytoplasm. It catalyses the reaction L-glutamate + ATP = L-glutamyl 5-phosphate + ADP. It functions in the pathway amino-acid biosynthesis; L-proline biosynthesis; L-glutamate 5-semialdehyde from L-glutamate: step 1/2. Catalyzes the transfer of a phosphate group to glutamate to form L-glutamate 5-phosphate. In Burkholderia thailandensis (strain ATCC 700388 / DSM 13276 / CCUG 48851 / CIP 106301 / E264), this protein is Glutamate 5-kinase.